A 652-amino-acid chain; its full sequence is Thioredoxin reductase 3 (652 aa).

Residues 1 to 12 (MEKPPSPPPPPR) show a composition bias toward pro residues. Residues 1–62 (MEKPPSPPPP…TSRPSSEARE (62 aa)) form a disordered region. R34 is subject to Asymmetric dimethylarginine; alternate. An Omega-N-methylarginine; alternate modification is found at R34. The residue at position 50 (S50) is a Phosphoserine. The 101-residue stretch at 65–165 (RRRLRDLIEG…KLLQDDSAHD (101 aa)) folds into the Glutaredoxin domain. 167–196 (DLIIIGGGSGGLSCAKEAANLGKKVMVLDF) serves as a coordination point for FAD. Residues C212 and C217 are joined by a disulfide bond. K388 bears the N6-succinyllysine mark. The Proton acceptor role is filled by H625. Residues 650–651 (CU) constitute a cross-link (cysteinyl-selenocysteine (Cys-Sec)). Position 651 (U651) is a non-standard amino acid, selenocysteine.

It belongs to the class-I pyridine nucleotide-disulfide oxidoreductase family. Homodimer. Requires FAD as cofactor. In terms of tissue distribution, expressed preferentially in testis where it is found in spermatids and spermatocytes but not in sperm. In elongating spermatids, expressed at the site of mitochondrial sheath formation. Low levels in other tissues including heart, lung, liver, kidney, brain, muscle and prostate.

The protein localises to the cytoplasm. It is found in the nucleus. The protein resides in the microsome. It localises to the endoplasmic reticulum. It catalyses the reaction [thioredoxin]-dithiol + NADP(+) = [thioredoxin]-disulfide + NADPH + H(+). In terms of biological role, displays thioredoxin reductase, glutaredoxin and glutathione reductase activities. Catalyzes disulfide bond isomerization. Promotes disulfide bond formation between GPX4 and various sperm proteins and may play a role in sperm maturation by promoting formation of sperm structural components. The protein is Thioredoxin reductase 3 of Mus musculus (Mouse).